The chain runs to 169 residues: 3-hydroxyacyl-[acyl-carrier-protein] dehydratase FabZ (169 aa).

The active site involves H66.

It belongs to the thioester dehydratase family. FabZ subfamily.

It localises to the cytoplasm. The catalysed reaction is a (3R)-hydroxyacyl-[ACP] = a (2E)-enoyl-[ACP] + H2O. In terms of biological role, involved in unsaturated fatty acids biosynthesis. Catalyzes the dehydration of short chain beta-hydroxyacyl-ACPs and long chain saturated and unsaturated beta-hydroxyacyl-ACPs. This Helicobacter hepaticus (strain ATCC 51449 / 3B1) protein is 3-hydroxyacyl-[acyl-carrier-protein] dehydratase FabZ.